A 355-amino-acid chain; its full sequence is Methyltransferase FUS9 (355 aa).

Residues Tyr-18, Asn-63, Asp-86, Ser-123, and Phe-124 each contribute to the S-adenosyl-L-homocysteine site. Phe-231 is a Mg(2+) binding site.

Belongs to the methyltransferase superfamily. Type-7 methyltransferase family. Requires Mg(2+) as cofactor.

It participates in mycotoxin biosynthesis. Methyltransferase; part of the gene cluster that mediates the biosynthesis of the mycotoxin fusarin C. Within the cluster, FUS1, FUS2, FUS8 and FUS9 are sufficient for fusarin production. The roles of the other FUS members are yet undetermined. The fusarin C synthetase FUS1 is responsible for the condensation of one acetyl-coenzyme A (CoA) unit with six malonyl-CoA units and the amide linkage of the arising heptaketide and homoserine, subsequently releasing the first intermediate, prefusarin, as an alcohol with an open ring structure. The cytochrome P450 monooxygenase FUS8 participates in multiple oxidation processes at carbon C-20 and is able to use the FUS1 product as substrate, resulting in formation of 20-hydroxy-prefusarin. This reaction seems to be essential before the 2-pyrrolidone ring closure can be catalyzed by FUS2, generating 20-hydroxy-fusarin. FUS8 is able to further oxidizes carbon C-20 after ring closure, resulting in the formation of carboxy-fusarin C. As the last step, FUS9 methylates the hydroxyl group at C-21 to generate fusarin C. Fusarin C can then rearrange to epi-fusarin C, the (z)-isomers, and fusarin A and fusarin D. The polypeptide is Methyltransferase FUS9 (Gibberella moniliformis (strain M3125 / FGSC 7600) (Maize ear and stalk rot fungus)).